The chain runs to 368 residues: Isopentenyl-diphosphate delta-isomerase (368 aa).

7-8 (RK) is a substrate binding site. Residues Thr65, 66 to 68 (GMT), Ser96, and Asn125 each bind FMN. 96–98 (SQR) provides a ligand contact to substrate. Gln160 is a binding site for substrate. Glu161 is a binding site for Mg(2+). Residues Lys193, Ser218, Thr223, 275-277 (GIR), and 296-297 (AL) each bind FMN.

The protein belongs to the IPP isomerase type 2 family. Homooctamer. Dimer of tetramers. The cofactor is FMN. NADPH serves as cofactor. Mg(2+) is required as a cofactor.

It is found in the cytoplasm. The enzyme catalyses isopentenyl diphosphate = dimethylallyl diphosphate. In terms of biological role, involved in the biosynthesis of isoprenoids. Catalyzes the 1,3-allylic rearrangement of the homoallylic substrate isopentenyl (IPP) to its allylic isomer, dimethylallyl diphosphate (DMAPP). This chain is Isopentenyl-diphosphate delta-isomerase, found in Saccharolobus islandicus (strain M.16.27) (Sulfolobus islandicus).